Here is a 298-residue protein sequence, read N- to C-terminus: Nucleotide-binding protein RSKD131_3085 (298 aa).

Residue 11-18 (GPSGAGRT) coordinates ATP. 58 to 61 (DVRN) contacts GTP.

This sequence belongs to the RapZ-like family.

In terms of biological role, displays ATPase and GTPase activities. The protein is Nucleotide-binding protein RSKD131_3085 of Cereibacter sphaeroides (strain KD131 / KCTC 12085) (Rhodobacter sphaeroides).